A 444-amino-acid chain; its full sequence is Tol-Pal system protein TolB (444 aa).

Positions 1–19 are cleaved as a signal peptide; the sequence is MRNIIYFILSLLFSFKGYA.

It belongs to the TolB family. The Tol-Pal system is composed of five core proteins: the inner membrane proteins TolA, TolQ and TolR, the periplasmic protein TolB and the outer membrane protein Pal. They form a network linking the inner and outer membranes and the peptidoglycan layer.

The protein localises to the periplasm. Functionally, part of the Tol-Pal system, which plays a role in outer membrane invagination during cell division and is important for maintaining outer membrane integrity. This chain is Tol-Pal system protein TolB, found in Rickettsia felis (strain ATCC VR-1525 / URRWXCal2) (Rickettsia azadi).